The sequence spans 213 residues: Uracil phosphoribosyltransferase (213 aa).

Residues R78, R103, and 130–138 contribute to the 5-phospho-alpha-D-ribose 1-diphosphate site; that span reads DPMLATGGS. Residues I193 and 198–200 each bind uracil; that span reads GDA. Position 199 (D199) interacts with 5-phospho-alpha-D-ribose 1-diphosphate.

Belongs to the UPRTase family. It depends on Mg(2+) as a cofactor.

The catalysed reaction is UMP + diphosphate = 5-phospho-alpha-D-ribose 1-diphosphate + uracil. It participates in pyrimidine metabolism; UMP biosynthesis via salvage pathway; UMP from uracil: step 1/1. Its activity is regulated as follows. Allosterically activated by GTP. Functionally, catalyzes the conversion of uracil and 5-phospho-alpha-D-ribose 1-diphosphate (PRPP) to UMP and diphosphate. This Bordetella pertussis (strain Tohama I / ATCC BAA-589 / NCTC 13251) protein is Uracil phosphoribosyltransferase.